The following is a 492-amino-acid chain: Protein nucleotidyltransferase YdiU (492 aa).

Residues G88, G90, R91, K111, D123, G124, R174, and R181 each contribute to the ATP site. D250 functions as the Proton acceptor in the catalytic mechanism. Positions 251 and 260 each coordinate Mg(2+). D260 serves as a coordination point for ATP.

Belongs to the SELO family. The cofactor is Mg(2+). Requires Mn(2+) as cofactor.

It catalyses the reaction L-seryl-[protein] + ATP = 3-O-(5'-adenylyl)-L-seryl-[protein] + diphosphate. The catalysed reaction is L-threonyl-[protein] + ATP = 3-O-(5'-adenylyl)-L-threonyl-[protein] + diphosphate. It carries out the reaction L-tyrosyl-[protein] + ATP = O-(5'-adenylyl)-L-tyrosyl-[protein] + diphosphate. The enzyme catalyses L-histidyl-[protein] + UTP = N(tele)-(5'-uridylyl)-L-histidyl-[protein] + diphosphate. It catalyses the reaction L-seryl-[protein] + UTP = O-(5'-uridylyl)-L-seryl-[protein] + diphosphate. The catalysed reaction is L-tyrosyl-[protein] + UTP = O-(5'-uridylyl)-L-tyrosyl-[protein] + diphosphate. Functionally, nucleotidyltransferase involved in the post-translational modification of proteins. It can catalyze the addition of adenosine monophosphate (AMP) or uridine monophosphate (UMP) to a protein, resulting in modifications known as AMPylation and UMPylation. This is Protein nucleotidyltransferase YdiU from Rhodopseudomonas palustris (strain TIE-1).